A 410-amino-acid polypeptide reads, in one-letter code: Extracellular serine proteinase (410 aa).

Residues 1-19 (MKRGGLWLLLGLLVLSACS) form the signal peptide. The propeptide occupies 20 to 132 (SNPPAASTQE…IEADQEVRAF (113 aa)). In terms of domain architecture, Inhibitor I9 spans 45–130 (YIVVYKENAD…AYIEADQEVR (86 aa)). The region spanning 139–410 (TWGLDRIDQR…SPNLLLYTPF (272 aa)) is the Peptidase S8 domain. Residues Asp-171, His-204, and Ser-356 each act as charge relay system in the active site.

Belongs to the peptidase S8 family. In terms of processing, contains 4 Cys residues that form two disulfide bonds. Glycosylated. This proteinase has a 0.7% carbohydrate content.

Its subcellular location is the secreted. In terms of biological role, serine proteinase with preferred activity for amino acids with aromatic side groups at the P1' side of the scissible bond. This is Extracellular serine proteinase from Thermus sp. (strain Rt41A).